Consider the following 169-residue polypeptide: Cytochrome c oxidase subunit 4 isoform 1, mitochondrial (169 aa).

The N-terminal 22 residues, Met1 to Arg22, are a transit peptide targeting the mitochondrion. Over Ala23 to Asn98 the chain is Mitochondrial matrix. Position 29 is an N6-acetyllysine; alternate (Lys29). Position 29 is an N6-succinyllysine; alternate (Lys29). Residue Lys53 is modified to N6-acetyllysine. A phosphoserine mark is found at Ser56 and Ser58. Position 60 is an N6-acetyllysine; alternate (Lys60). N6-succinyllysine; alternate is present on Lys60. Lys67 bears the N6-acetyllysine mark. The helical transmembrane segment at Glu99–Tyr124 threads the bilayer. Residues Val125–Lys169 are Mitochondrial intermembrane-facing.

This sequence belongs to the cytochrome c oxidase IV family. In terms of assembly, component of the cytochrome c oxidase (complex IV, CIV), a multisubunit enzyme composed of 14 subunits. The complex is composed of a catalytic core of 3 subunits MT-CO1, MT-CO2 and MT-CO3, encoded in the mitochondrial DNA, and 11 supernumerary subunits COX4I, COX5A, COX5B, COX6A, COX6B, COX6C, COX7A, COX7B, COX7C, COX8 and NDUFA4, which are encoded in the nuclear genome. The complex exists as a monomer or a dimer and forms supercomplexes (SCs) in the inner mitochondrial membrane with NADH-ubiquinone oxidoreductase (complex I, CI) and ubiquinol-cytochrome c oxidoreductase (cytochrome b-c1 complex, complex III, CIII), resulting in different assemblies (supercomplex SCI(1)III(2)IV(1) and megacomplex MCI(2)III(2)IV(2)). Interacts with PHB2; the interaction decreases in absence of SPHK2. Interacts with AFG1L. Interacts with ABCB7; this interaction allows the regulation of cellular iron homeostasis and cellular reactive oxygen species (ROS) levels in cardiomyocytes. Interacts with FLVCR2; this interaction occurs in the absence of heme and is disrupted upon heme binding. Interacts with IRGC.

The protein resides in the mitochondrion inner membrane. It functions in the pathway energy metabolism; oxidative phosphorylation. Component of the cytochrome c oxidase, the last enzyme in the mitochondrial electron transport chain which drives oxidative phosphorylation. The respiratory chain contains 3 multisubunit complexes succinate dehydrogenase (complex II, CII), ubiquinol-cytochrome c oxidoreductase (cytochrome b-c1 complex, complex III, CIII) and cytochrome c oxidase (complex IV, CIV), that cooperate to transfer electrons derived from NADH and succinate to molecular oxygen, creating an electrochemical gradient over the inner membrane that drives transmembrane transport and the ATP synthase. Cytochrome c oxidase is the component of the respiratory chain that catalyzes the reduction of oxygen to water. Electrons originating from reduced cytochrome c in the intermembrane space (IMS) are transferred via the dinuclear copper A center (CU(A)) of subunit 2 and heme A of subunit 1 to the active site in subunit 1, a binuclear center (BNC) formed by heme A3 and copper B (CU(B)). The BNC reduces molecular oxygen to 2 water molecules using 4 electrons from cytochrome c in the IMS and 4 protons from the mitochondrial matrix. The protein is Cytochrome c oxidase subunit 4 isoform 1, mitochondrial (Cox4i1) of Rattus norvegicus (Rat).